A 62-amino-acid chain; its full sequence is Phyllokinin-1 (62 aa).

The first 19 residues, 1–19, serve as a signal peptide directing secretion; the sequence is MSFLKKSLFLVLFLGLVSS. A propeptide spanning residues 20–48 is cleaved from the precursor; sequence SICEEEKRETEEEENEDEIEEESEEKKRE. The disordered stretch occupies residues 22–62; the sequence is CEEEKRETEEEENEDEIEEESEEKKREDPERPPGFTPFRVY. Residues 30–42 are compositionally biased toward acidic residues; that stretch reads EEEENEDEIEEES. A compositionally biased stretch (basic and acidic residues) spans 43-52; sequence EEKKREDPER. Tyr62 carries the post-translational modification Sulfotyrosine; partial.

It belongs to the frog skin active peptide (FSAP) family. Bradykinin-related peptide subfamily. Asp,Pro,Glu-[Thr6,Val10]-phyllokinin and [Thr6,Val10]-phyllokinin occur in sulfated and nonsulfated forms. [Thr6]-bradykinin and Des-Arg-[Thr6]-bradykinin are nonsulfated. Expressed by the skin glands.

The protein localises to the secreted. Inhibits ACE with a Ki of 1.6 uM, and targets B2 bradykinin receptor (BDKRB2). Provokes contraction of smooth muscle preparation (ileum). In vivo, induces an early hyperalgesic effects in living rats after intraplantar injection. This Pithecopus azureus (Orange-legged monkey tree frog) protein is Phyllokinin-1.